Reading from the N-terminus, the 251-residue chain is Tyrosine phosphatase-like protein J3 (251 aa).

The 226-residue stretch at 26–251 folds into the Tyrosine-protein phosphatase domain; sequence IADEYYTIVP…PVLQNSKRRE (226 aa).

The protein belongs to the protein-tyrosine phosphatase family.

This is Tyrosine phosphatase-like protein J3 (J4) from Microplitis demolitor (Parasitoid wasp).